Consider the following 565-residue polypeptide: Membrane protein insertase YidC (565 aa).

A run of 6 helical transmembrane segments spans residues 6-26, 348-368, 370-390, 437-457, 479-499, and 516-536; these read VLLI…WSKN, LMAL…SLLH, WGWA…PLSA, GGCF…WVLV, PYFI…KLTP, and PLIF…YWVI.

It belongs to the OXA1/ALB3/YidC family. Type 1 subfamily. In terms of assembly, interacts with the Sec translocase complex via SecD. Specifically interacts with transmembrane segments of nascent integral membrane proteins during membrane integration.

The protein localises to the cell inner membrane. In terms of biological role, required for the insertion and/or proper folding and/or complex formation of integral membrane proteins into the membrane. Involved in integration of membrane proteins that insert both dependently and independently of the Sec translocase complex, as well as at least some lipoproteins. Aids folding of multispanning membrane proteins. The polypeptide is Membrane protein insertase YidC (Xylella fastidiosa (strain M23)).